Consider the following 129-residue polypeptide: Small ribosomal subunit protein eS6 (129 aa).

Residues 106 to 129 form a disordered region; that stretch reads QINASIVSRGEQSIDDLLGGEDDE.

It belongs to the eukaryotic ribosomal protein eS6 family.

In Natronomonas pharaonis (strain ATCC 35678 / DSM 2160 / CIP 103997 / JCM 8858 / NBRC 14720 / NCIMB 2260 / Gabara) (Halobacterium pharaonis), this protein is Small ribosomal subunit protein eS6.